Reading from the N-terminus, the 2599-residue chain is Non-reducing polyketide synthase azaA (2599 aa).

Residues 95–231 (PNILLSPMVV…AARSISSLQQ (137 aa)) are N-terminal acylcarrier protein transacylase domain (SAT). The active-site Nucleophile; for transacylase activity is the cysteine 132. The active-site Proton donor/acceptor; for transacylase activity is the histidine 250. Residues 372-790 (PNEIAVIGMS…GSNASMVVAQ (419 aa)) form the Ketosynthase family 3 (KS3) domain. Catalysis depends on for beta-ketoacyl synthase activity residues cysteine 539, histidine 674, and histidine 713. Residues 902-1193 (FGGQISNYVG…ITSMASRALG (292 aa)) form a malonyl-CoA:ACP transacylase (MAT) domain region. Residues 1282–1413 (PKTLWSLIEA…GKLAFLSGQD (132 aa)) are N-terminal hotdog fold. Positions 1282 to 1591 (PKTLWSLIEA…YHKVAKASMS (310 aa)) constitute a PKS/mFAS DH domain. Residues 1310 to 1589 (LVSGHVIANT…INYHKVAKAS (280 aa)) form a product template (PT) domain region. The active-site Proton acceptor; for dehydratase activity is the histidine 1314. A C-terminal hotdog fold region spans residues 1443 to 1591 (ADDIIQGRNI…YHKVAKASMS (149 aa)). Aspartate 1499 functions as the Proton donor; for dehydratase activity in the catalytic mechanism. The segment at 1601–1652 (EAAPSSSTRAHPTSSSSPRLPGPFVPEDKSQNETQTAGTNAVAKKKSEKSAQ) is disordered. A compositionally biased stretch (low complexity) spans 1602 to 1619 (AAPSSSTRAHPTSSSSPR). The Carrier domain occupies 1653-1727 (QNVLDKTRAL…GLVEYVQSAV (75 aa)). Serine 1687 carries the post-translational modification O-(pantetheine 4'-phosphoryl)serine. The interval 1749–1779 (NLAASPSSSSSSTNLTEDSSLDPTETTTNIS) is disordered. Residues 1750 to 1766 (LAASPSSSSSSTNLTED) are compositionally biased toward low complexity. Polar residues predominate over residues 1769-1779 (LDPTETTTNIS). The interval 1952–2140 (DSLLNKLSYR…VGYGQVDWTD (189 aa)) is methyltransferase domain. The segment at 2222 to 2467 (ITGATGSLGV…LCWTPVNDVA (246 aa)) is NADPH-binding (R) domain.

Pantetheine 4'-phosphate serves as cofactor.

Its pathway is secondary metabolite biosynthesis. Non-reducing polyketide synthase; part of the gene cluster that mediates the biosynthesis of azaphilones, a class of fungal metabolites characterized by a highly oxygenated pyrano-quinone bicyclic core and exhibiting a broad range of bioactivities. In the first step, the non-reducing polyketide synthase azaA forms the hexaketide precursor from successive condensations of five malonyl-CoA units, presumably with a simple acetyl-CoA starter unit. The reactive polyketide chain then undergoes a PT-mediated C2-C7 cyclization to afford the aromatic ring and is eventually released as an aldehyde through the R-domain. The putative ketoreductase azaE is proposed to catalyze the reduction of the terminal ketone resulting in the early culture product FK17-P2a. The monooxygenase azaH was demonstrated to be the only enzyme required to convert FK17-P2a to azanigerone E. AzaH first hydroxylates the benzaldehyde intermediate FK17-P2a at C4, which triggers the formation of the pyran-ring to afford azanigerone E. In parallel, the 2,4-dimethylhexanoyl chain is synthesized by the HR-PKS azaB and is proposed to be transferred to the C4-hydroxyl of azanigerone E by the acyltransferase azaD directly from the ACP domain of azaB. Alternatively, the 2,4-dimethyl-hexanoyl chain may be offloaded from the HR-PKS as a carboxylic acid and converted to an acyl-CoA by azaF. The resulting acyl-CoA molecule could then be taken up as a substrate by AzaD to form azanigerone B. To yield the carboxylic acid substituent in azanigerone A, the hydroxypropyl side chain of azanigerone B would need to undergo a C-C oxidative cleavage catalyzed by cytochrome P450 AzaI. AzaI is proposed to act on a vicinal diol that leads to a C-C bond scission either through an alkoxyradical intermediate or a peroxy complex. In the biosynthesis of azanigerone A, azanigerone B first undergoes hydroxylation at C10, possibly catalyzed by one of the two FAD-dependent monooxygenases encoded in the cluster, azaG or azaL, resulting in the vicinal diol azanigerone C. Oxidative cleavage of azanigerone C by azaI would yield the corresponding aldehyde derivative of azanigerone A. Finally, the dehydrogenase azaJ is proposed to convert the aldehyde functional group into the carboxylic acid, completing the conversion from azanigerone B to azanigerone A. Alternatively, the oxidation of aldehyde to carboxylic acid may be catalyzed by the same P450 enzyme azaI via consecutive oxidation or by endogenous alcohol dehydrogenase. The chain is Non-reducing polyketide synthase azaA from Aspergillus niger (strain ATCC 1015 / CBS 113.46 / FGSC A1144 / LSHB Ac4 / NCTC 3858a / NRRL 328 / USDA 3528.7).